Reading from the N-terminus, the 47-residue chain is uncharacterized protein (47 aa).

The chain crosses the membrane as a helical span at residues 28 to 45; that stretch reads VMIWGCLPYFLYVLIRMF.

Its subcellular location is the cell membrane. This is an uncharacterized protein from Bacillus subtilis (strain 168).